The sequence spans 249 residues: DNA repair protein RecO (249 aa).

Belongs to the RecO family.

Involved in DNA repair and RecF pathway recombination. This Leptospira biflexa serovar Patoc (strain Patoc 1 / Ames) protein is DNA repair protein RecO.